The sequence spans 300 residues: Acetylglutamate kinase (300 aa).

Residues 72–73, R94, and N197 contribute to the substrate site; that span reads GG.

It belongs to the acetylglutamate kinase family. ArgB subfamily.

It localises to the cytoplasm. The enzyme catalyses N-acetyl-L-glutamate + ATP = N-acetyl-L-glutamyl 5-phosphate + ADP. It functions in the pathway amino-acid biosynthesis; L-arginine biosynthesis; N(2)-acetyl-L-ornithine from L-glutamate: step 2/4. Its function is as follows. Catalyzes the ATP-dependent phosphorylation of N-acetyl-L-glutamate. The sequence is that of Acetylglutamate kinase from Aromatoleum aromaticum (strain DSM 19018 / LMG 30748 / EbN1) (Azoarcus sp. (strain EbN1)).